Consider the following 634-residue polypeptide: DNA-directed RNA polymerase subunit gamma (634 aa).

4 residues coordinate Zn(2+): cysteine 74, cysteine 76, cysteine 89, and cysteine 92. Mg(2+) is bound by residues aspartate 471, aspartate 473, and aspartate 475.

This sequence belongs to the RNA polymerase beta' chain family. RpoC1 subfamily. As to quaternary structure, in cyanobacteria the RNAP catalytic core is composed of 2 alpha, 1 beta, 1 beta', 1 gamma and 1 omega subunit. When a sigma factor is associated with the core the holoenzyme is formed, which can initiate transcription. Mg(2+) serves as cofactor. Requires Zn(2+) as cofactor.

The enzyme catalyses RNA(n) + a ribonucleoside 5'-triphosphate = RNA(n+1) + diphosphate. In terms of biological role, DNA-dependent RNA polymerase catalyzes the transcription of DNA into RNA using the four ribonucleoside triphosphates as substrates. The protein is DNA-directed RNA polymerase subunit gamma of Prochlorococcus marinus (strain AS9601).